The following is a 475-amino-acid chain: Putative amidase AmiD (475 aa).

Catalysis depends on charge relay system residues Lys93 and Ser166. Catalysis depends on Ser190, which acts as the Acyl-ester intermediate.

Belongs to the amidase family.

The enzyme catalyses a monocarboxylic acid amide + H2O = a monocarboxylate + NH4(+). The protein is Putative amidase AmiD (amiD) of Mycobacterium bovis (strain ATCC BAA-935 / AF2122/97).